The primary structure comprises 882 residues: Alanine--tRNA ligase (882 aa).

Residues H571, H575, C673, and H677 each coordinate Zn(2+).

This sequence belongs to the class-II aminoacyl-tRNA synthetase family. Zn(2+) serves as cofactor.

The protein resides in the cytoplasm. It carries out the reaction tRNA(Ala) + L-alanine + ATP = L-alanyl-tRNA(Ala) + AMP + diphosphate. Catalyzes the attachment of alanine to tRNA(Ala) in a two-step reaction: alanine is first activated by ATP to form Ala-AMP and then transferred to the acceptor end of tRNA(Ala). Also edits incorrectly charged Ser-tRNA(Ala) and Gly-tRNA(Ala) via its editing domain. This chain is Alanine--tRNA ligase, found in Stenotrophomonas maltophilia (strain K279a).